We begin with the raw amino-acid sequence, 215 residues long: Octanoyltransferase (215 aa).

The 176-residue stretch at 31-206 (TDAPDEVWLV…QLVKHLDYAE (176 aa)) folds into the BPL/LPL catalytic domain. Residues 70-77 (RGGQVTYH), 137-139 (SLG), and 150-152 (GLA) each bind substrate. Cys-168 acts as the Acyl-thioester intermediate in catalysis.

It belongs to the LipB family.

The protein localises to the cytoplasm. The catalysed reaction is octanoyl-[ACP] + L-lysyl-[protein] = N(6)-octanoyl-L-lysyl-[protein] + holo-[ACP] + H(+). It participates in protein modification; protein lipoylation via endogenous pathway; protein N(6)-(lipoyl)lysine from octanoyl-[acyl-carrier-protein]: step 1/2. Its function is as follows. Catalyzes the transfer of endogenously produced octanoic acid from octanoyl-acyl-carrier-protein onto the lipoyl domains of lipoate-dependent enzymes. Lipoyl-ACP can also act as a substrate although octanoyl-ACP is likely to be the physiological substrate. This Pseudomonas fluorescens (strain ATCC BAA-477 / NRRL B-23932 / Pf-5) protein is Octanoyltransferase.